A 190-amino-acid chain; its full sequence is 7-methyl-GTP pyrophosphatase (190 aa).

The Proton acceptor role is filled by Asp69.

Belongs to the Maf family. YceF subfamily. A divalent metal cation serves as cofactor.

The protein localises to the cytoplasm. The enzyme catalyses N(7)-methyl-GTP + H2O = N(7)-methyl-GMP + diphosphate + H(+). Functionally, nucleoside triphosphate pyrophosphatase that hydrolyzes 7-methyl-GTP (m(7)GTP). May have a dual role in cell division arrest and in preventing the incorporation of modified nucleotides into cellular nucleic acids. This Xanthomonas axonopodis pv. citri (strain 306) protein is 7-methyl-GTP pyrophosphatase.